The primary structure comprises 226 residues: Neuron-specific vesicular protein calcyon (226 aa).

Positions 1 to 23 are disordered; that stretch reads MVKLGCSFSGKPGKETGDQDGAA. Residues 1–88 lie on the Extracellular side of the membrane; that stretch reads MVKLGCSFSG…EEGRRLPTAR (88 aa). The chain crosses the membrane as a helical span at residues 89–109; that stretch reads MIAFAMALLGCVLIMYKAIWY. Over 110–226 the chain is Cytoplasmic; sequence DQFTCPDGFL…AEDVPSQSPK (117 aa). A disordered region spans residues 189–226; sequence TAAAAAAAEGNEPSGKPLDMREKEDPQKAEDVPSQSPK. Basic and acidic residues predominate over residues 206-219; sequence LDMREKEDPQKAED.

It belongs to the NSG family. In terms of assembly, interacts with CLTA. Expressed exclusively in neurons (at protein level). In all age groups, expressed at significantly higher levels in the medial prefrontal and orbital frontal cortices of spontaneously hypertensive rats (SHR), a model of attention deficit-hyperactivity disorder, than Wistar Kyoto (WKY) animals. In the motor cortex, dorsal striatum and nucleus accumbens, expression is significantly elevated in SHR only in younger animals.

The protein resides in the cytoplasmic vesicle membrane. It is found in the cell membrane. Functionally, interacts with clathrin light chain A and stimulates clathrin self-assembly and clathrin-mediated endocytosis. The sequence is that of Neuron-specific vesicular protein calcyon (Caly) from Rattus norvegicus (Rat).